We begin with the raw amino-acid sequence, 388 residues long: MADPNGRRRLPTGDPDQANASPSRRVSAVDGVTGGEGRPTYSHFPPGAYEPTDVAYGIRDAANDERARARARARHDQGGGAHDHHHDRPRQDQRGEAHLHDLPGEKSEVPDVGPSDQQGKEASDTDMAPLAALAKRSYDVNFPPLHEHRAAPFPAPAPAFAPAPAGTMGSSSAQVQGDGAPDNHDHDPRHLPRQDQSGGAHPDDLHGEKTIGSGSDILDDSKRGMINAGPQHGRITTSNGGSGSGSDKGKGVSYAGDKPASSSSSSSSAGQQGSDTDKTPSAAAASSYAVNFPPLLPAPAPVPAPAPAPAVAGAMGVANAHHKIALCSKWRKGRCHNGAACRYSHGEEEQRIVPEMRVGGGGRPCPELAAAKGWCRYGLNCKYCHGGV.

Disordered stretches follow at residues 1 to 130 (MADP…MAPL) and 144 to 282 (PLHE…TPSA). Composition is skewed to basic and acidic residues over residues 61 to 109 (AAND…KSEV) and 181 to 193 (PDNH…HLPR). Residues 260–274 (ASSSSSSSSAGQQGS) are compositionally biased toward low complexity. C3H1-type zinc fingers lie at residues 321–348 (HHKI…HGEE) and 359–388 (GGGG…HGGV).

This Oryza sativa subsp. japonica (Rice) protein is Zinc finger CCCH domain-containing protein 47.